The chain runs to 387 residues: Alkanesulfonate monooxygenase (387 aa).

The protein belongs to the SsuD family.

The enzyme catalyses an alkanesulfonate + FMNH2 + O2 = an aldehyde + FMN + sulfite + H2O + 2 H(+). Its function is as follows. Catalyzes the desulfonation of aliphatic sulfonates. In Cupriavidus metallidurans (strain ATCC 43123 / DSM 2839 / NBRC 102507 / CH34) (Ralstonia metallidurans), this protein is Alkanesulfonate monooxygenase.